The primary structure comprises 470 residues: Ribosomal protein uS12 methylthiotransferase RimO (470 aa).

The MTTase N-terminal domain maps to 20-131; that stretch reads PTVAFAHLGC…IVEVLQQVEA (112 aa). Residues cysteine 29, cysteine 65, cysteine 94, cysteine 169, cysteine 173, and cysteine 176 each contribute to the [4Fe-4S] cluster site. One can recognise a Radical SAM core domain in the interval 155–384; the sequence is TTGEAVAYLK…MTLQQPISAA (230 aa). In terms of domain architecture, TRAM spans 387–458; that stretch reads ASWIGKTVDV…IYDLSGHVVS (72 aa).

Belongs to the methylthiotransferase family. RimO subfamily. The cofactor is [4Fe-4S] cluster.

The protein resides in the cytoplasm. The enzyme catalyses L-aspartate(89)-[ribosomal protein uS12]-hydrogen + (sulfur carrier)-SH + AH2 + 2 S-adenosyl-L-methionine = 3-methylsulfanyl-L-aspartate(89)-[ribosomal protein uS12]-hydrogen + (sulfur carrier)-H + 5'-deoxyadenosine + L-methionine + A + S-adenosyl-L-homocysteine + 2 H(+). Its function is as follows. Catalyzes the methylthiolation of an aspartic acid residue of ribosomal protein uS12. This chain is Ribosomal protein uS12 methylthiotransferase RimO, found in Synechococcus sp. (strain CC9311).